A 124-amino-acid chain; its full sequence is Fluoride-specific ion channel FluC 1 (124 aa).

The next 4 membrane-spanning stretches (helical) occupy residues 1 to 21 (MCAV…ALGA), 30 to 50 (LWPG…LLGY), 64 to 84 (FLGV…VDAV), and 93 to 113 (LYVV…MLAG). The Na(+) site is built by Gly71 and Thr74.

It belongs to the fluoride channel Fluc/FEX (TC 1.A.43) family.

Its subcellular location is the cell membrane. It carries out the reaction fluoride(in) = fluoride(out). With respect to regulation, na(+) is not transported, but it plays an essential structural role and its presence is essential for fluoride channel function. Functionally, fluoride-specific ion channel. Important for reducing fluoride concentration in the cell, thus reducing its toxicity. In Rhodococcus jostii (strain RHA1), this protein is Fluoride-specific ion channel FluC 1.